The following is a 323-amino-acid chain: Cyclin-H (323 aa).

The interval Gly-296 to Leu-323 is disordered. Over residues Glu-310 to Leu-323 the composition is skewed to acidic residues.

This sequence belongs to the cyclin family. Cyclin C subfamily. As to quaternary structure, associates primarily with CDK7 and MAT1 to form the CAK complex. CAK can further associate with the core-TFIIH to form the TFIIH basal transcription factor.

It localises to the nucleus. Its function is as follows. Regulates CDK7, the catalytic subunit of the CDK-activating kinase (CAK) enzymatic complex. CAK activates the cyclin-associated kinases CDK1, CDK2, CDK4 and CDK6 by threonine phosphorylation. CAK complexed to the core-TFIIH basal transcription factor activates RNA polymerase II by serine phosphorylation of the repetitive C-terminal domain (CTD) of its large subunit (POLR2A), allowing its escape from the promoter and elongation of the transcripts. Involved in cell cycle control and in RNA transcription by RNA polymerase II. Its expression and activity are constant throughout the cell cycle. The sequence is that of Cyclin-H (ccnh) from Xenopus laevis (African clawed frog).